Reading from the N-terminus, the 69-residue chain is Cold shock-like protein CspC (69 aa).

A CSD domain is found at 6–66; that stretch reads GQVKWFNESK…GQKGPAAVNV (61 aa).

The protein resides in the cytoplasm. In Buchnera aphidicola subsp. Acyrthosiphon pisum (strain APS) (Acyrthosiphon pisum symbiotic bacterium), this protein is Cold shock-like protein CspC (cspC).